The chain runs to 188 residues: ATP synthase subunit b 1 (188 aa).

Residues 35–55 (VHFSSHFFWLAISFGFFYLFI) traverse the membrane as a helical segment.

This sequence belongs to the ATPase B chain family. As to quaternary structure, F-type ATPases have 2 components, F(1) - the catalytic core - and F(0) - the membrane proton channel. F(1) has five subunits: alpha(3), beta(3), gamma(1), delta(1), epsilon(1). F(0) has three main subunits: a(1), b(2) and c(10-14). The alpha and beta chains form an alternating ring which encloses part of the gamma chain. F(1) is attached to F(0) by a central stalk formed by the gamma and epsilon chains, while a peripheral stalk is formed by the delta and b chains.

The protein localises to the cell inner membrane. Its function is as follows. F(1)F(0) ATP synthase produces ATP from ADP in the presence of a proton or sodium gradient. F-type ATPases consist of two structural domains, F(1) containing the extramembraneous catalytic core and F(0) containing the membrane proton channel, linked together by a central stalk and a peripheral stalk. During catalysis, ATP synthesis in the catalytic domain of F(1) is coupled via a rotary mechanism of the central stalk subunits to proton translocation. Component of the F(0) channel, it forms part of the peripheral stalk, linking F(1) to F(0). The protein is ATP synthase subunit b 1 of Bartonella tribocorum (strain CIP 105476 / IBS 506).